Reading from the N-terminus, the 170-residue chain is Large ribosomal subunit protein uL10 (170 aa).

It belongs to the universal ribosomal protein uL10 family. In terms of assembly, part of the ribosomal stalk of the 50S ribosomal subunit. The N-terminus interacts with L11 and the large rRNA to form the base of the stalk. The C-terminus forms an elongated spine to which L12 dimers bind in a sequential fashion forming a multimeric L10(L12)X complex.

In terms of biological role, forms part of the ribosomal stalk, playing a central role in the interaction of the ribosome with GTP-bound translation factors. The protein is Large ribosomal subunit protein uL10 of Chlamydia caviae (strain ATCC VR-813 / DSM 19441 / 03DC25 / GPIC) (Chlamydophila caviae).